The sequence spans 88 residues: Phosphocarrier protein HPr (88 aa).

The HPr domain maps to 1–88; that stretch reads MEQKSYVIID…DILSKEGLTK (88 aa). The active-site Pros-phosphohistidine intermediate is the H15. Phosphoserine; by HPrK/P is present on S46.

It belongs to the HPr family.

It localises to the cytoplasm. Phosphorylation on Ser-46 inhibits the phosphoryl transfer from enzyme I to HPr. In terms of biological role, general (non sugar-specific) component of the phosphoenolpyruvate-dependent sugar phosphotransferase system (sugar PTS). This major carbohydrate active-transport system catalyzes the phosphorylation of incoming sugar substrates concomitantly with their translocation across the cell membrane. The phosphoryl group from phosphoenolpyruvate (PEP) is transferred to the phosphoryl carrier protein HPr by enzyme I. Phospho-HPr then transfers it to the PTS EIIA domain. The polypeptide is Phosphocarrier protein HPr (ptsH) (Staphylococcus xylosus).